The following is a 482-amino-acid chain: Glycogen synthase (482 aa).

Lysine 18 contacts ADP-alpha-D-glucose.

It belongs to the glycosyltransferase 1 family. Bacterial/plant glycogen synthase subfamily.

It carries out the reaction [(1-&gt;4)-alpha-D-glucosyl](n) + ADP-alpha-D-glucose = [(1-&gt;4)-alpha-D-glucosyl](n+1) + ADP + H(+). The protein operates within glycan biosynthesis; glycogen biosynthesis. In terms of biological role, synthesizes alpha-1,4-glucan chains using ADP-glucose. The chain is Glycogen synthase from Rhodopseudomonas palustris (strain HaA2).